Reading from the N-terminus, the 237-residue chain is MEASRRWPYAAWFMAVLGLVAVFSSSEAYVFYAGGRDGWVVDPAESFNYWAERNRFQVNDTIVFLHDDEVGGSVLQVTEGDFDTCSTGNPVQRLEDVAAGRSVFRFDRSGPFFFISGDEDRCQKGQKLYIIVMAVRPTKPSEAPEPAGAAGPVSSKSWSWQAFPPAGATTPPPLPPSWGSAPEHAQAPGKSSLGGSGGGEMSRSSSLGAPPPTSGAAGLAGVVASVVVGVLGALLMF.

The N-terminal stretch at 1–28 (MEASRRWPYAAWFMAVLGLVAVFSSSEA) is a signal peptide. The Phytocyanin domain occupies 29-134 (YVFYAGGRDG…GQKLYIIVMA (106 aa)). N-linked (GlcNAc...) asparagine glycosylation is present at Asn59. Cys85 and Cys122 form a disulfide bridge. The interval 139-215 (KPSEAPEPAG…SLGAPPPTSG (77 aa)) is disordered. Composition is skewed to low complexity over residues 140 to 152 (PSEA…AAGP) and 201 to 215 (MSRS…PTSG). The GPI-anchor amidated serine moiety is linked to residue Ser206. The propeptide at 207 to 237 (LGAPPPTSGAAGLAGVVASVVVGVLGALLMF) is removed in mature form.

The protein belongs to the early nodulin-like (ENODL) family. In terms of tissue distribution, expressed ubiquitously. Accumulates particularly in reproductive tissues, especially in maturing seeds.

The protein localises to the vacuole. It localises to the aleurone grain membrane. Functionally, may act as a carbohydrate transporter. This Oryza sativa subsp. japonica (Rice) protein is Early nodulin-like protein 1.